Reading from the N-terminus, the 431-residue chain is Argininosuccinate lyase (431 aa).

This sequence belongs to the lyase 1 family. Argininosuccinate lyase subfamily.

The protein localises to the cytoplasm. The catalysed reaction is 2-(N(omega)-L-arginino)succinate = fumarate + L-arginine. Its pathway is amino-acid biosynthesis; L-arginine biosynthesis; L-arginine from L-ornithine and carbamoyl phosphate: step 3/3. The sequence is that of Argininosuccinate lyase from Xanthomonas campestris pv. campestris (strain ATCC 33913 / DSM 3586 / NCPPB 528 / LMG 568 / P 25).